Consider the following 1593-residue polypeptide: Laminin subunit gamma-1 (1593 aa).

Residues M1–G19 form the signal peptide. A Laminin N-terminal domain is found at R30–R269. N-linked (GlcNAc...) asparagine glycans are attached at residues N44 and N118. Intrachain disulfides connect C270/C279, C272/C289, C291/C300, C303/C323, C326/C335, C328/C351, C354/C363, C366/C379, C382/C394, C384/C400, C402/C411, C414/C426, C429/C440, C431/C447, C449/C458, and C461/C476. Laminin EGF-like domains follow at residues C270–P325, C326–S381, C382–P428, and C429–P478. The 169-residue stretch at R505 to K673 folds into the Laminin IV type A domain. N-linked (GlcNAc...) asparagine glycosylation is found at N560, N634, and N654. 24 disulfides stabilise this stretch: C708/C717, C710/C724, C726/C735, C738/C754, C757/C765, C759/C776, C779/C788, C791/C809, C812/C826, C814/C833, C836/C845, C848/C865, C868/C882, C870/C889, C891/C900, C903/C916, C919/C931, C921/C938, C940/C949, C952/C964, C967/C979, C969/C985, C987/C996, and C999/C1012. Laminin EGF-like domains follow at residues C708 to A756, C757 to A811, C812 to P867, C868 to R918, C919 to P966, and C967 to Q1014. Residues N1006, N1091, N1159, N1189, N1207, N1254, N1364, and N1379 are each glycosylated (N-linked (GlcNAc...) asparagine). The segment at Q1014–P1593 is domain II and I. Residues L1021–L1580 adopt a coiled-coil conformation.

Laminin is a complex glycoprotein, consisting of three different polypeptide chains (alpha, beta, gamma), which are bound to each other by disulfide bonds into a cross-shaped molecule comprising one long and three short arms with globules at each end.

The protein localises to the secreted. Its subcellular location is the extracellular space. It localises to the extracellular matrix. The protein resides in the basement membrane. Its function is as follows. Binding to cells via a high affinity receptor, laminin is thought to mediate the attachment, migration and organization of cells into tissues during embryonic development by interacting with other extracellular matrix components. The chain is Laminin subunit gamma-1 (lamc1) from Danio rerio (Zebrafish).